The sequence spans 242 residues: Orotidine 5'-phosphate decarboxylase (242 aa).

Substrate-binding positions include D16, K37, 64-73 (DLKFHDIPNT), T128, R190, Q199, G219, and R220. Catalysis depends on K66, which acts as the Proton donor.

Belongs to the OMP decarboxylase family. Type 1 subfamily. Homodimer.

It catalyses the reaction orotidine 5'-phosphate + H(+) = UMP + CO2. The protein operates within pyrimidine metabolism; UMP biosynthesis via de novo pathway; UMP from orotate: step 2/2. Functionally, catalyzes the decarboxylation of orotidine 5'-monophosphate (OMP) to uridine 5'-monophosphate (UMP). The protein is Orotidine 5'-phosphate decarboxylase of Prochlorococcus marinus (strain AS9601).